Here is a 442-residue protein sequence, read N- to C-terminus: tRNA-2-methylthio-N(6)-dimethylallyladenosine synthase (442 aa).

An MTTase N-terminal domain is found at 3 to 120 (NKLYIRTFGC…LPNMLNDALN (118 aa)). Positions 12, 49, 83, 157, 161, and 164 each coordinate [4Fe-4S] cluster. Residues 143–375 (RTNSVTAFVS…QKTINNNTEH (233 aa)) enclose the Radical SAM core domain. The region spanning 378–440 (QLMIGSIQKV…GNSLMGDLLT (63 aa)) is the TRAM domain.

It belongs to the methylthiotransferase family. MiaB subfamily. In terms of assembly, monomer. It depends on [4Fe-4S] cluster as a cofactor.

It localises to the cytoplasm. The enzyme catalyses N(6)-dimethylallyladenosine(37) in tRNA + (sulfur carrier)-SH + AH2 + 2 S-adenosyl-L-methionine = 2-methylsulfanyl-N(6)-dimethylallyladenosine(37) in tRNA + (sulfur carrier)-H + 5'-deoxyadenosine + L-methionine + A + S-adenosyl-L-homocysteine + 2 H(+). In terms of biological role, catalyzes the methylthiolation of N6-(dimethylallyl)adenosine (i(6)A), leading to the formation of 2-methylthio-N6-(dimethylallyl)adenosine (ms(2)i(6)A) at position 37 in tRNAs that read codons beginning with uridine. This chain is tRNA-2-methylthio-N(6)-dimethylallyladenosine synthase, found in Vesicomyosocius okutanii subsp. Calyptogena okutanii (strain HA).